A 409-amino-acid polypeptide reads, in one-letter code: Pleckstrin homology domain-containing family O member 1 (409 aa).

Positions M1–K24 are disordered. One can recognise a PH domain in the interval P21–T132. The interval R133–E193 is interaction with capping proteins (CPs). The segment at N136 to I308 is interaction with ATM, CKIP, IFP35 and NMI. A disordered region spans residues L218–G267. Residues S227 and S271 each carry the phosphoserine modification. The interval I308–M409 is negative regulator of AP-1 activity. 2 disordered regions span residues E325–Q350 and T390–M409. Basic and acidic residues predominate over residues D331–P340. At S342 the chain carries Phosphoserine. The span at T390 to S402 shows a compositional bias: polar residues.

As to quaternary structure, heterodimer or homodimer. Interacts with CK2 and actin capping subunits (capping protein CP-alpha and CP-beta). CKIP1 and CK2 together inhibit the activity of actin capping protein at the barbed ends of actin filaments. Interacts with ATM, IFP35, JUN, JUND, NMI and PI3K. Interacts with AKT1, AKT2 and AKT3 (each isozyme of PKB), PtdIns(3,5)P2, PtdIns(4,5)P2 and PtdIns(3,4,5)P2. C-terminal fragments could be released during apoptosis via caspase-3-dependent cleavage. In terms of tissue distribution, abundantly expressed in skeletal muscle and heart, moderately in kidney, liver, brain and placenta and sparingly in the pancreas and lung. Easily detectable in cell lines such as MOLT-4, HEK293 and Jurkat.

It is found in the cell membrane. It localises to the nucleus. The protein localises to the cytoplasm. In terms of biological role, plays a role in the regulation of the actin cytoskeleton through its interactions with actin capping protein (CP). May function to target CK2 to the plasma membrane thereby serving as an adapter to facilitate the phosphorylation of CP by protein kinase 2 (CK2). Appears to target ATM to the plasma membrane. Appears to also inhibit tumor cell growth by inhibiting AKT-mediated cell-survival. Also implicated in PI3K-regulated muscle differentiation, the regulation of AP-1 activity (plasma membrane bound AP-1 regulator that translocates to the nucleus) and the promotion of apoptosis induced by tumor necrosis factor TNF. When bound to PKB, it inhibits it probably by decreasing PKB level of phosphorylation. The chain is Pleckstrin homology domain-containing family O member 1 (PLEKHO1) from Homo sapiens (Human).